Here is a 522-residue protein sequence, read N- to C-terminus: Zinc finger and BTB domain-containing protein 18 (522 aa).

The 68-residue stretch at 24–91 (CDCTVLVGDA…MYEGKLQFKD (68 aa)) folds into the BTB domain. Basic and acidic residues predominate over residues 121 to 143 (ATTEADSTKKEEDASSCSDKVES). Positions 121 to 166 (ATTEADSTKKEEDASSCSDKVESLSDGSSHMAGDLPSDEDEGEDDK) are disordered. A Phosphoserine modification is found at serine 157. Residue lysine 273 forms a Glycyl lysine isopeptide (Lys-Gly) (interchain with G-Cter in SUMO2) linkage. The segment at 310-427 (EPAHLAPLRE…TFSCMYTLKR (118 aa)) is interaction with DNMT3A. C2H2-type zinc fingers lie at residues 370–392 (FMCP…LSTH), 410–432 (PTCS…ERTH), 438–460 (YTCT…AVVH), and 466–489 (HACK…RKFH). 2 positions are modified to phosphoserine: serine 516 and serine 517.

Belongs to the krueppel C2H2-type zinc-finger protein family. ZBTB18 subfamily. Interacts with DNMT3A.

It localises to the nucleus. Its function is as follows. Transcriptional repressor that plays a role in various developmental processes such as myogenesis and brain development. Specifically binds the consensus DNA sequence 5'-[AC]ACATCTG[GT][AC]-3' which contains the E box core, and acts by recruiting chromatin remodeling multiprotein complexes. Plays a key role in myogenesis by directly repressing the expression of ID2 and ID3, 2 inhibitors of skeletal myogenesis. Also involved in controlling cell division of progenitor cells and regulating the survival of postmitotic cortical neurons. May also play a role in the organization of chromosomes in the nucleus. The protein is Zinc finger and BTB domain-containing protein 18 (Zbtb18) of Rattus norvegicus (Rat).